The chain runs to 290 residues: Lipoyl synthase (290 aa).

[4Fe-4S] cluster contacts are provided by Cys-32, Cys-37, Cys-43, Cys-58, Cys-62, Cys-65, and Ser-272. The region spanning 44–261 (WGEGTATFMI…KEVAVSLGFK (218 aa)) is the Radical SAM core domain.

This sequence belongs to the radical SAM superfamily. Lipoyl synthase family. The cofactor is [4Fe-4S] cluster.

It is found in the cytoplasm. It catalyses the reaction [[Fe-S] cluster scaffold protein carrying a second [4Fe-4S](2+) cluster] + N(6)-octanoyl-L-lysyl-[protein] + 2 oxidized [2Fe-2S]-[ferredoxin] + 2 S-adenosyl-L-methionine + 4 H(+) = [[Fe-S] cluster scaffold protein] + N(6)-[(R)-dihydrolipoyl]-L-lysyl-[protein] + 4 Fe(3+) + 2 hydrogen sulfide + 2 5'-deoxyadenosine + 2 L-methionine + 2 reduced [2Fe-2S]-[ferredoxin]. The protein operates within protein modification; protein lipoylation via endogenous pathway; protein N(6)-(lipoyl)lysine from octanoyl-[acyl-carrier-protein]: step 2/2. Functionally, catalyzes the radical-mediated insertion of two sulfur atoms into the C-6 and C-8 positions of the octanoyl moiety bound to the lipoyl domains of lipoate-dependent enzymes, thereby converting the octanoylated domains into lipoylated derivatives. In Pyrobaculum aerophilum (strain ATCC 51768 / DSM 7523 / JCM 9630 / CIP 104966 / NBRC 100827 / IM2), this protein is Lipoyl synthase.